Here is a 209-residue protein sequence, read N- to C-terminus: uncharacterized protein (209 aa).

In terms of biological role, may influence the expression of the nuc gene. This is an uncharacterized protein from Shigella flexneri.